Here is a 72-residue protein sequence, read N- to C-terminus: Translation initiation factor IF-1 (72 aa).

The 72-residue stretch at 1 to 72 (MAKEDSIEME…SKGRIVYRAR (72 aa)) folds into the S1-like domain.

This sequence belongs to the IF-1 family. As to quaternary structure, component of the 30S ribosomal translation pre-initiation complex which assembles on the 30S ribosome in the order IF-2 and IF-3, IF-1 and N-formylmethionyl-tRNA(fMet); mRNA recruitment can occur at any time during PIC assembly.

It is found in the cytoplasm. One of the essential components for the initiation of protein synthesis. Stabilizes the binding of IF-2 and IF-3 on the 30S subunit to which N-formylmethionyl-tRNA(fMet) subsequently binds. Helps modulate mRNA selection, yielding the 30S pre-initiation complex (PIC). Upon addition of the 50S ribosomal subunit IF-1, IF-2 and IF-3 are released leaving the mature 70S translation initiation complex. The sequence is that of Translation initiation factor IF-1 from Nitrosococcus oceani (strain ATCC 19707 / BCRC 17464 / JCM 30415 / NCIMB 11848 / C-107).